Consider the following 144-residue polypeptide: Large ribosomal subunit protein uL13 (144 aa).

This sequence belongs to the universal ribosomal protein uL13 family. As to quaternary structure, part of the 50S ribosomal subunit.

Functionally, this protein is one of the early assembly proteins of the 50S ribosomal subunit, although it is not seen to bind rRNA by itself. It is important during the early stages of 50S assembly. The polypeptide is Large ribosomal subunit protein uL13 (Syntrophomonas wolfei subsp. wolfei (strain DSM 2245B / Goettingen)).